We begin with the raw amino-acid sequence, 305 residues long: tRNA pseudouridine synthase B (305 aa).

Catalysis depends on D48, which acts as the Nucleophile.

This sequence belongs to the pseudouridine synthase TruB family. Type 1 subfamily.

It catalyses the reaction uridine(55) in tRNA = pseudouridine(55) in tRNA. In terms of biological role, responsible for synthesis of pseudouridine from uracil-55 in the psi GC loop of transfer RNAs. This Stutzerimonas stutzeri (strain A1501) (Pseudomonas stutzeri) protein is tRNA pseudouridine synthase B.